The chain runs to 237 residues: Methylosome subunit pICln (237 aa).

At Ser-2 the chain carries N-acetylserine. Phosphoserine occurs at positions 102, 144, 193, and 195. A Phosphothreonine modification is found at Thr-223.

The protein belongs to the pICln (TC 1.A.47) family. In terms of assembly, component of the methylosome, a 20S complex containing at least PRMT5/SKB1, WDR77/MEP50 and CLNS1A/pICln. May mediate SNRPD1 and SNRPD3 methylation. Forms a 6S pICln-Sm complex composed of CLNS1A/pICln, SNRPD1, SNRPD2, SNRPE, SNRPF and SNRPG; ring-like structure where CLNS1A/pICln mimics additional Sm proteins and which is unable to assemble into the core snRNP. Interacts with LSM10 and LSM11.

It is found in the cytoplasm. Its subcellular location is the cytosol. It localises to the nucleus. The protein resides in the cytoskeleton. Functionally, involved in both the assembly of spliceosomal snRNPs and the methylation of Sm proteins. Chaperone that regulates the assembly of spliceosomal U1, U2, U4 and U5 small nuclear ribonucleoproteins (snRNPs), the building blocks of the spliceosome, and thereby plays an important role in the splicing of cellular pre-mRNAs. Most spliceosomal snRNPs contain a common set of Sm proteins SNRPB, SNRPD1, SNRPD2, SNRPD3, SNRPE, SNRPF and SNRPG that assemble in a heptameric protein ring on the Sm site of the small nuclear RNA to form the core snRNP (Sm core). In the cytosol, the Sm proteins SNRPD1, SNRPD2, SNRPE, SNRPF and SNRPG are trapped in an inactive 6S pICln-Sm complex by the chaperone CLNS1A that controls the assembly of the core snRNP. Dissociation by the SMN complex of CLNS1A from the trapped Sm proteins and their transfer to an SMN-Sm complex triggers the assembly of core snRNPs and their transport to the nucleus. The protein is Methylosome subunit pICln (CLNS1A) of Pongo abelii (Sumatran orangutan).